A 205-amino-acid polypeptide reads, in one-letter code: Thymidylate kinase (205 aa).

13–20 (GIDGSGKS) serves as a coordination point for ATP.

This sequence belongs to the thymidylate kinase family.

The enzyme catalyses dTMP + ATP = dTDP + ADP. Its function is as follows. Phosphorylation of dTMP to form dTDP in both de novo and salvage pathways of dTTP synthesis. In Leptospira borgpetersenii serovar Hardjo-bovis (strain L550), this protein is Thymidylate kinase.